Consider the following 136-residue polypeptide: Histone H3, embryonic (136 aa).

Positions 1-43 (MARTKQTARKSTGGKAPRKQLATKAARKSAPATGGVKKPHRYR) are disordered. K5 bears the N6-methylated lysine mark. K10 carries the N6-acetyllysine; alternate modification. An N6-methylated lysine; alternate modification is found at K10. Residue S11 is modified to Phosphoserine. Residues K15 and K24 each carry the N6-acetyllysine modification. 3 positions are modified to N6-methylated lysine: K28, K37, and K80.

This sequence belongs to the histone H3 family. As to quaternary structure, the nucleosome is a histone octamer containing two molecules each of H2A, H2B, H3 and H4 assembled in one H3-H4 heterotetramer and two H2A-H2B heterodimers. The octamer wraps approximately 147 bp of DNA. In terms of processing, acetylation is generally linked to gene activation. Methylation at Lys-5 is linked to gene activation. Methylation at Lys-10 is linked to gene repression.

It localises to the nucleus. Its subcellular location is the chromosome. Its function is as follows. Core component of nucleosome. Nucleosomes wrap and compact DNA into chromatin, limiting DNA accessibility to the cellular machineries which require DNA as a template. Histones thereby play a central role in transcription regulation, DNA repair, DNA replication and chromosomal stability. DNA accessibility is regulated via a complex set of post-translational modifications of histones, also called histone code, and nucleosome remodeling. This Strongylocentrotus purpuratus (Purple sea urchin) protein is Histone H3, embryonic.